A 92-amino-acid chain; its full sequence is Alpha-hemoglobin-stabilizing protein (92 aa).

It belongs to the AHSP family. As to quaternary structure, monomer. Forms a heterodimer with free alpha-hemoglobin. Does not bind beta-hemoglobin nor alpha(2)beta(2) hemoglobin A.

Its subcellular location is the cytoplasm. Its function is as follows. Acts as a chaperone to prevent the harmful aggregation of alpha-hemoglobin during normal erythroid cell development. Specifically protects free alpha-hemoglobin from precipitation. The sequence is that of Alpha-hemoglobin-stabilizing protein (AHSP) from Bos taurus (Bovine).